A 309-amino-acid polypeptide reads, in one-letter code: Ribosomal RNA small subunit methyltransferase H (309 aa).

S-adenosyl-L-methionine-binding positions include 36–38, aspartate 55, phenylalanine 81, aspartate 102, and glutamine 109; that span reads AGH.

Belongs to the methyltransferase superfamily. RsmH family.

The protein resides in the cytoplasm. The enzyme catalyses cytidine(1402) in 16S rRNA + S-adenosyl-L-methionine = N(4)-methylcytidine(1402) in 16S rRNA + S-adenosyl-L-homocysteine + H(+). Its function is as follows. Specifically methylates the N4 position of cytidine in position 1402 (C1402) of 16S rRNA. This is Ribosomal RNA small subunit methyltransferase H from Mycoplasma genitalium (strain ATCC 33530 / DSM 19775 / NCTC 10195 / G37) (Mycoplasmoides genitalium).